A 537-amino-acid chain; its full sequence is MLACLAILAVVGLGMTRVSALSKDDTAQLKITNIEGGPTVTLYKIGEGVYNTNGDSFINFKYAEGVSLTETGPTSQEITTIANGINTGKIKPFSTENVSISNGTATYNARGASVYIALLTGATDGRTYNPILLAASYNGEGNLVTKNIDSKSNYLYGQTSVAKSSLPSITKKVTGTIDDVNKKTTSLGSVLSYSLTFELPSYTKEAVNKTVYVSDNMSEGLTFNFNSLTVEWKGKMANITEDGSVMVENTKIGIAKEVNNGFNLSFIYDSLESISPNISYKAVVNNKAIVGEEGNPNKAEFFYSNNPTKGNTYDNLDKKPDKGNGITSKEDSKIVYTYQIAFRKVDSVSKTPLIGAIFGVYDTSNKLIDIVTTNKNGYAISTQVSSGKYKIKELKAPKGYSLNTETYEITANWVTATVKTSANSKSTTYTSDKNKATDNSEQVGWLKNGIFYSIDSRPTGNDVKEAYIESTKALTDGTTFSKSNEGSGTVLLETDIPNTKLGELPSTGSIGTYLFKAIGSAAMIGAIGIYIVKRRKA.

Positions 1 to 22 (MLACLAILAVVGLGMTRVSALS) are cleaved as a signal peptide. The segment at 310-330 (GNTYDNLDKKPDKGNGITSKE) is hydrophilic. Positions 504-508 (LPSTG) match the LPXTG sorting signal motif. Threonine 507 is modified (pentaglycyl murein peptidoglycan amidated threonine). Residues 508–537 (GSIGTYLFKAIGSAAMIGAIGIYIVKRRKA) constitute a propeptide, removed by sortase.

Its subcellular location is the secreted. The protein resides in the cell wall. This is Trypsin-resistant surface T6 protein (tee6) from Streptococcus pyogenes serotype M6 (strain ATCC BAA-946 / MGAS10394).